We begin with the raw amino-acid sequence, 140 residues long: uncharacterized protein (140 aa).

Over residues 1-19 (MGLCGSKTQPMPSQTTTVA) the composition is skewed to polar residues. A disordered region spans residues 1-140 (MGLCGSKTQP…ERERENMIYD (140 aa)). Gly-2 carries N-myristoyl glycine lipidation. Cys-4 is lipidated: S-palmitoyl cysteine. Residues 27–40 (INRDTVKSKQELRH) are compositionally biased toward basic and acidic residues. Positions 41–51 (KEKKDKKKKTQ) are enriched in basic residues. The span at 73–140 (DPSKNKVSPK…ERERENMIYD (68 aa)) shows a compositional bias: basic and acidic residues.

It to S.pombe new13. In terms of processing, myristoylated. Post-translationally, the N-myristoylated protein is further palmitoylated by ERF2, PFA4 and slightly by PFA5, but not by PFA3.

It localises to the cytoplasm. It is found in the cytosol. This is an uncharacterized protein from Saccharomyces cerevisiae (strain ATCC 204508 / S288c) (Baker's yeast).